Here is a 1129-residue protein sequence, read N- to C-terminus: Ubiquitin carboxyl-terminal hydrolase 7 (1129 aa).

The disordered stretch occupies residues 1–20 (MEIETDQSIEAMDTQDTQEV). The 122-residue stretch at 101–222 (ETTFSFTVEN…NNSITLEVHV (122 aa)) folds into the MATH domain. Positions 241 to 548 (VGLKNQGATC…NAYMLVYIRQ (308 aa)) constitute a USP domain. Residue cysteine 250 is the Nucleophile of the active site. Histidine 490 (proton acceptor) is an active-site residue. Serine 1117 is modified (phosphoserine).

Belongs to the peptidase C19 family.

It localises to the nucleus. The catalysed reaction is Thiol-dependent hydrolysis of ester, thioester, amide, peptide and isopeptide bonds formed by the C-terminal Gly of ubiquitin (a 76-residue protein attached to proteins as an intracellular targeting signal).. Functionally, hydrolase that deubiquitinates target proteins. This chain is Ubiquitin carboxyl-terminal hydrolase 7 (Usp7), found in Drosophila melanogaster (Fruit fly).